Reading from the N-terminus, the 803-residue chain is Pesticidal crystal protein Cry13Aa (803 aa).

Belongs to the delta endotoxin family.

Endotoxin with nematicidal activity. In Bacillus thuringiensis, this protein is Pesticidal crystal protein Cry13Aa (cry13Aa).